Here is an 861-residue protein sequence, read N- to C-terminus: Probable beta-glucosidase A (861 aa).

Positions 1–19 (MKLGWIEVAALAAASVVSA) are cleaved as a signal peptide. N-linked (GlcNAc...) asparagine glycans are attached at residues Asn62, Asn212, and Asn253. Asp281 is a catalytic residue. Asn316, Asn323, Asn355, Asn443, Asn524, Asn543, Asn565, Asn669, and Asn713 each carry an N-linked (GlcNAc...) asparagine glycan. A disordered region spans residues 730–754 (DSKYIPEGATDGSAQPRLPASGGAG). An N-linked (GlcNAc...) asparagine glycan is attached at Asn846.

This sequence belongs to the glycosyl hydrolase 3 family.

The protein resides in the secreted. The enzyme catalyses Hydrolysis of terminal, non-reducing beta-D-glucosyl residues with release of beta-D-glucose.. It functions in the pathway glycan metabolism; cellulose degradation. Functionally, beta-glucosidases are one of a number of cellulolytic enzymes involved in the degradation of cellulosic biomass. Catalyzes the last step releasing glucose from the inhibitory cellobiose. This is Probable beta-glucosidase A (bglA) from Aspergillus oryzae (strain ATCC 42149 / RIB 40) (Yellow koji mold).